Here is a 150-residue protein sequence, read N- to C-terminus: MGLEKSFILFSLLVLVLGWVQPSLGRKPSVQDFKRQHMDPDSPPNSRPTYCNQMMKRRGMTKGSCKRVNTFLHESWATVKAICSQRQMTCKTSSRNNCHKSSSTLHITDCRLKGSSKYPNCDYTTTNSQKHIIIACEGNPLVPVHFDASV.

Positions 1–25 (MGLEKSFILFSLLVLVLGWVQPSLG) are cleaved as a signal peptide. Arginine 35 contacts substrate. Catalysis depends on histidine 37, which acts as the Proton acceptor. 4 disulfides stabilise this stretch: cysteine 51–cysteine 110, cysteine 65–cysteine 121, cysteine 83–cysteine 136, and cysteine 90–cysteine 98. Substrate contacts are provided by residues 66–70 (KRVNT), lysine 91, and arginine 111. The Proton donor role is filled by histidine 145.

It belongs to the pancreatic ribonuclease family. In terms of assembly, monomer.

Its subcellular location is the secreted. It carries out the reaction an [RNA] containing cytidine + H2O = an [RNA]-3'-cytidine-3'-phosphate + a 5'-hydroxy-ribonucleotide-3'-[RNA].. It catalyses the reaction an [RNA] containing uridine + H2O = an [RNA]-3'-uridine-3'-phosphate + a 5'-hydroxy-ribonucleotide-3'-[RNA].. Its function is as follows. Endonuclease that catalyzes the cleavage of RNA on the 3' side of pyrimidine nucleotides. Acts on single-stranded and double-stranded RNA. The chain is Ribonuclease pancreatic delta-type (Rnase1d) from Rattus norvegicus (Rat).